A 30-amino-acid polypeptide reads, in one-letter code: U-actitoxin-Bcg2a (30 aa).

An intrachain disulfide couples C7 to C27.

It localises to the secreted. It is found in the nematocyst. Possible voltage-gated potassium channel (Kv) blocker. The sequence is that of U-actitoxin-Bcg2a from Bunodosoma cangicum (Sea anemone).